Consider the following 397-residue polypeptide: Serpin B10 (397 aa).

The short motif at 74–77 (KKRK) is the Nuclear localization signal element.

It belongs to the serpin family. Ov-serpin subfamily.

It is found in the nucleus. It localises to the cytoplasm. Protease inhibitor that may play a role in the regulation of protease activities during hematopoiesis and apoptosis induced by TNF. May regulate protease activities in the cytoplasm and in the nucleus. This Sorex araneus (Eurasian common shrew) protein is Serpin B10 (SERPINB10).